The primary structure comprises 96 residues: Putative regulatory protein Teth514_1762 (96 aa).

The protein belongs to the RemA family.

The protein is Putative regulatory protein Teth514_1762 of Thermoanaerobacter sp. (strain X514).